Consider the following 383-residue polypeptide: Alanine racemase (383 aa).

Lys50 (proton acceptor; specific for D-alanine) is an active-site residue. Lys50 carries the post-translational modification N6-(pyridoxal phosphate)lysine. Arg151 is a substrate binding site. Tyr279 (proton acceptor; specific for L-alanine) is an active-site residue. Met327 is a substrate binding site.

This sequence belongs to the alanine racemase family. Requires pyridoxal 5'-phosphate as cofactor.

The catalysed reaction is L-alanine = D-alanine. The protein operates within amino-acid biosynthesis; D-alanine biosynthesis; D-alanine from L-alanine: step 1/1. In terms of biological role, catalyzes the interconversion of L-alanine and D-alanine. May also act on other amino acids. The protein is Alanine racemase (alr) of Chlorobaculum tepidum (strain ATCC 49652 / DSM 12025 / NBRC 103806 / TLS) (Chlorobium tepidum).